Reading from the N-terminus, the 139-residue chain is Large-conductance mechanosensitive channel (139 aa).

3 helical membrane passes run 16–36 (VIDL…VKAL), 40–60 (IVMP…LAWV), and 79–99 (GAFI…FMLV).

It belongs to the MscL family. As to quaternary structure, homopentamer.

Its subcellular location is the cell inner membrane. Functionally, channel that opens in response to stretch forces in the membrane lipid bilayer. May participate in the regulation of osmotic pressure changes within the cell. The chain is Large-conductance mechanosensitive channel from Phenylobacterium zucineum (strain HLK1).